Here is a 199-residue protein sequence, read N- to C-terminus: Peptidyl-tRNA hydrolase (199 aa).

Position 15 (Y15) interacts with tRNA. The active-site Proton acceptor is the H20. The tRNA site is built by Y66, N68, and N114.

This sequence belongs to the PTH family. As to quaternary structure, monomer.

The protein localises to the cytoplasm. The enzyme catalyses an N-acyl-L-alpha-aminoacyl-tRNA + H2O = an N-acyl-L-amino acid + a tRNA + H(+). Functionally, hydrolyzes ribosome-free peptidyl-tRNAs (with 1 or more amino acids incorporated), which drop off the ribosome during protein synthesis, or as a result of ribosome stalling. In terms of biological role, catalyzes the release of premature peptidyl moieties from peptidyl-tRNA molecules trapped in stalled 50S ribosomal subunits, and thus maintains levels of free tRNAs and 50S ribosomes. The chain is Peptidyl-tRNA hydrolase from Burkholderia cenocepacia (strain ATCC BAA-245 / DSM 16553 / LMG 16656 / NCTC 13227 / J2315 / CF5610) (Burkholderia cepacia (strain J2315)).